Consider the following 174-residue polypeptide: Keratin-associated protein 9-2 (174 aa).

17 repeat units span residues 8 to 12 (CCQPT), 13 to 17 (CCRTT), 18 to 22 (CCRTT), 37 to 41 (CCQPA), 42 to 46 (CCVSS), 51 to 55 (CCRPT), 61 to 65 (CCRTT), 66 to 70 (CCQPT), 75 to 79 (CCQPS), 80 to 84 (CCSTP), 85 to 89 (CCQPT), 90 to 94 (CCGSS), 95 to 99 (CCGQT), 144 to 148 (CCRPA), 149 to 153 (CCETT), 154 to 158 (CCRTT), and 168 to 172 (CCQPS). The segment at 8-172 (CCQPTCCRTT…TCVSSCCQPS (165 aa)) is 17 X 5 AA repeats of C-C-[RQVSGE]-[SPTQ]-[TASP].

The protein belongs to the KRTAP type 9 family. In terms of assembly, interacts with hair keratins.

Functionally, in the hair cortex, hair keratin intermediate filaments are embedded in an interfilamentous matrix, consisting of hair keratin-associated proteins (KRTAP), which are essential for the formation of a rigid and resistant hair shaft through their extensive disulfide bond cross-linking with abundant cysteine residues of hair keratins. The matrix proteins include the high-sulfur and high-glycine-tyrosine keratins. This is Keratin-associated protein 9-2 (KRTAP9-2) from Homo sapiens (Human).